The following is a 593-amino-acid chain: Corrinoid activation enzyme RamQ (593 aa).

The 2Fe-2S ferredoxin-type domain maps to 1 to 76 (MRVLFPLLEE…GMEIYASREQ (76 aa)). [2Fe-2S] cluster-binding residues include cysteine 35, cysteine 41, cysteine 44, and cysteine 60.

[2Fe-2S] cluster is required as a cofactor.

Its function is as follows. Involved in the degradation of the quaternary amines L-proline betaine and L-carnitine. Component of a corrinoid-dependent methyltransferase system that transfers a methyl group from L-proline betaine or L-carnitine to tetrahydrofolate (THF), forming methyl-THF, a key intermediate in the Wood-Ljungdahl acetogenesis pathway. RamQ is not required for the methyl transfer, but it stimulates reduction of reconstituted MtqC from the Co(II) state to the Co(I) state in vitro. It also stimulates the rate of THF methylation. This is Corrinoid activation enzyme RamQ from Eubacterium limosum.